Reading from the N-terminus, the 239-residue chain is Leucyl/phenylalanyl-tRNA--protein transferase (239 aa).

Belongs to the L/F-transferase family.

Its subcellular location is the cytoplasm. The enzyme catalyses N-terminal L-lysyl-[protein] + L-leucyl-tRNA(Leu) = N-terminal L-leucyl-L-lysyl-[protein] + tRNA(Leu) + H(+). It carries out the reaction N-terminal L-arginyl-[protein] + L-leucyl-tRNA(Leu) = N-terminal L-leucyl-L-arginyl-[protein] + tRNA(Leu) + H(+). It catalyses the reaction L-phenylalanyl-tRNA(Phe) + an N-terminal L-alpha-aminoacyl-[protein] = an N-terminal L-phenylalanyl-L-alpha-aminoacyl-[protein] + tRNA(Phe). Functions in the N-end rule pathway of protein degradation where it conjugates Leu, Phe and, less efficiently, Met from aminoacyl-tRNAs to the N-termini of proteins containing an N-terminal arginine or lysine. The polypeptide is Leucyl/phenylalanyl-tRNA--protein transferase (Aliivibrio fischeri (strain ATCC 700601 / ES114) (Vibrio fischeri)).